A 414-amino-acid chain; its full sequence is MHFFSAIVLTCLASTAVAYPALEQAASSAEFKEYQKQEKRQTLGFDAASQIVSTTGDHAWQAPGANDIRGPCPGLNSMANHGYIPRNGYTSDAQIIAAMQAVFNISPDFGGFLTVLGSAMGGDGLGFSIGGPPSASLLTATGLVGKPQGMSNTHNRFESDQSITRDDLYQTGNDVTLNMNFFQDLLNSSLPKGWYDIDVLGNHAVKRFQYSVANNPYFFKGLNTAFIPEATSALVTYLFANHSAACPAGCLDATNLKSFYSVTGSGSTLKYTPGHERIPDNWYKYPVGYGVANVFADMVTVYSKYSNQAAFGGNTGTVNSFTGLDVANITGGVYNAETLLQGNNLGCFLFNGMEFFMPDLISNGGVIGDVSGVVSSLTGTITSLLAPFNCPKLSGIDKKAFAIYPGWNDGKPRK.

An N-terminal signal peptide occupies residues 1 to 18; it reads MHFFSAIVLTCLASTAVA. Heme is bound at residue Cys-72. 3 N-linked (GlcNAc...) asparagine glycosylation sites follow: Asn-187, Asn-241, and Asn-328.

The protein belongs to the chloroperoxidase family. It depends on heme b as a cofactor.

It participates in mycotoxin biosynthesis. In terms of biological role, peroxidase; part of the fragmented gene cluster that mediates the biosynthesis of dothistromin (DOTH), a polyketide toxin very similar in structure to the aflatoxin precursor, versicolorin B. The first step of the pathway is the conversion of acetate to norsolorinic acid (NOR) and requires the fatty acid synthase subunits hexA and hexB, as well as the polyketide synthase pksA. PksA combines a hexanoyl starter unit and 7 malonyl-CoA extender units to synthesize the precursor NOR. The hexanoyl starter unit is provided to the acyl-carrier protein (ACP) domain by the fungal fatty acid synthase hexA/hexB. The second step is the conversion of NOR to averantin (AVN) and requires the norsolorinic acid ketoreductase nor1, which catalyzes the dehydration of norsolorinic acid to form (1'S)-averantin. The cytochrome P450 monooxygenase avnA then catalyzes the hydroxylation of AVN to 5'hydroxyaverantin (HAVN). The next step is performed by adhA that transforms HAVN to averufin (AVF). Averufin might then be converted to hydroxyversicolorone by cypX and avfA. Hydroxyversicolorone is further converted versiconal hemiacetal acetate (VHA) by moxY. VHA is then the substrate for the versiconal hemiacetal acetate esterase est1 to yield versiconal (VAL). Versicolorin B synthase vbsA then converts VAL to versicolorin B (VERB) by closing the bisfuran ring. Then, the activity of the versicolorin B desaturase verB leads to versicolorin A (VERA). DotB, a predicted chloroperoxidase, may perform epoxidation of the A-ring of VERA. Alternatively, a cytochrome P450, such as cypX or avnA could catalyze this step. It is also possible that another, uncharacterized, cytochrome P450 enzyme is responsible for this step. Opening of the epoxide could potentially be achieved by the epoxide hydrolase epoA. However, epoA seems not to be required for DOTH biosynthesis, but other epoxide hydrolases may have the ability to complement this hydrolysis. Alternatively, opening of the epoxide ring could be achieved non-enzymatically. The next step is the deoxygenation of ring A to yield the 5,8-dihydroxyanthraquinone which is most likely catalyzed by the NADPH dehydrogenase encoded by ver1. The last stages of DOTH biosynthesis are proposed to involve hydroxylation of the bisfuran. OrdB and norB might have oxidative roles here. An alternative possibility is that cytochrome P450 monoogenases such as avnA and cypX might perform these steps in addition to previously proposed steps. In Dothistroma septosporum (Red band needle blight fungus), this protein is Dothistromin biosynthesis peroxidase dotB.